Here is a 242-residue protein sequence, read N- to C-terminus: uncharacterized protein (242 aa).

Residues 1-12 (MKLRRERFERRN) show a composition bias toward basic and acidic residues. Residues 1-21 (MKLRRERFERRNGSGKNSQSS) are disordered. The Cytoplasmic segment spans residues 1-23 (MKLRRERFERRNGSGKNSQSSSS). The chain crosses the membrane as a helical span at residues 24–44 (WMVTFTDLITLILVFFILLFS). Topologically, residues 45–242 (MSQIDLQKFK…VIKKSKTTSS (198 aa)) are extracellular. A disordered region spans residues 64-91 (GNGLQPDQTSIEKKNTSPSDTKKQEDQQ). A compositionally biased stretch (basic and acidic residues) spans 73-89 (SIEKKNTSPSDTKKQED). Residues 117-238 (ERGVVLVLQE…RVEIVIKKSK (122 aa)) enclose the OmpA-like domain.

The protein belongs to the MotB family.

The protein localises to the cell membrane. In terms of biological role, may be involved in some transport function. This is an uncharacterized protein from Bacillus subtilis (strain 168).